Consider the following 220-residue polypeptide: FMN-dependent NADH:quinone oxidoreductase 1 (220 aa).

18–20 (SVS) provides a ligand contact to FMN.

This sequence belongs to the azoreductase type 1 family. In terms of assembly, homodimer. FMN is required as a cofactor.

The catalysed reaction is 2 a quinone + NADH + H(+) = 2 a 1,4-benzosemiquinone + NAD(+). The enzyme catalyses N,N-dimethyl-1,4-phenylenediamine + anthranilate + 2 NAD(+) = 2-(4-dimethylaminophenyl)diazenylbenzoate + 2 NADH + 2 H(+). In terms of biological role, quinone reductase that provides resistance to thiol-specific stress caused by electrophilic quinones. Functionally, also exhibits azoreductase activity. Catalyzes the reductive cleavage of the azo bond in aromatic azo compounds to the corresponding amines. The polypeptide is FMN-dependent NADH:quinone oxidoreductase 1 (Bacillus anthracis).